We begin with the raw amino-acid sequence, 328 residues long: Lipoyl synthase (328 aa).

Residues C57, C62, C68, C83, C87, C90, and S298 each contribute to the [4Fe-4S] cluster site. The Radical SAM core domain maps to 69-287 (WSRGTATFML…REEGLSLGFL (219 aa)).

This sequence belongs to the radical SAM superfamily. Lipoyl synthase family. [4Fe-4S] cluster serves as cofactor.

The protein resides in the cytoplasm. The catalysed reaction is [[Fe-S] cluster scaffold protein carrying a second [4Fe-4S](2+) cluster] + N(6)-octanoyl-L-lysyl-[protein] + 2 oxidized [2Fe-2S]-[ferredoxin] + 2 S-adenosyl-L-methionine + 4 H(+) = [[Fe-S] cluster scaffold protein] + N(6)-[(R)-dihydrolipoyl]-L-lysyl-[protein] + 4 Fe(3+) + 2 hydrogen sulfide + 2 5'-deoxyadenosine + 2 L-methionine + 2 reduced [2Fe-2S]-[ferredoxin]. It participates in protein modification; protein lipoylation via endogenous pathway; protein N(6)-(lipoyl)lysine from octanoyl-[acyl-carrier-protein]: step 2/2. In terms of biological role, catalyzes the radical-mediated insertion of two sulfur atoms into the C-6 and C-8 positions of the octanoyl moiety bound to the lipoyl domains of lipoate-dependent enzymes, thereby converting the octanoylated domains into lipoylated derivatives. The polypeptide is Lipoyl synthase (Deinococcus geothermalis (strain DSM 11300 / CIP 105573 / AG-3a)).